The primary structure comprises 56 residues: Large ribosomal subunit protein bL33 (56 aa).

It belongs to the bacterial ribosomal protein bL33 family.

This chain is Large ribosomal subunit protein bL33, found in Anaplasma phagocytophilum (strain HZ).